The primary structure comprises 341 residues: Gibberellin 2-beta-dioxygenase 2 (341 aa).

In terms of domain architecture, Fe2OG dioxygenase spans 179 to 283 (KSDSCLRLNH…RISMIYFGGP (105 aa)). 3 residues coordinate Fe cation: His-207, Asp-209, and His-264. Residue Arg-274 is part of the active site. Position 274 (Arg-274) interacts with 2-oxoglutarate.

It belongs to the iron/ascorbate-dependent oxidoreductase family. GA2OX subfamily. Requires Fe(2+) as cofactor. In terms of tissue distribution, preferentially expressed in flowers, siliques, and upper stems. Expressed in cotyledons, at the base of the shoot apical meristem and developing leaf primordia.

It carries out the reaction gibberellin A1 + 2-oxoglutarate + O2 = gibberellin A8 + succinate + CO2. It participates in plant hormone biosynthesis; gibberellin biosynthesis. Catalyzes the 2-beta-hydroxylation of several biologically active gibberellins, leading to the homeostatic regulation of their endogenous level. Catabolism of gibberellins (GAs) plays a central role in plant development. Converts GA9/GA20 to GA51/GA29 and GA4/GA1 to GA34/GA8. In Arabidopsis thaliana (Mouse-ear cress), this protein is Gibberellin 2-beta-dioxygenase 2 (GA2OX2).